The chain runs to 142 residues: gSG7 salivary protein (142 aa).

An N-terminal signal peptide occupies residues 1–25 (METKLVLALIACGVICLLQTTPTEA). 2 cysteine pairs are disulfide-bonded: Cys83/Cys138 and Cys106/Cys116.

As to quaternary structure, interacts with host coagulation factor XII (F12) (inactive and activated). Interacts with host high molecular weight kininogen (KNG1) (inactive and activated).

The protein localises to the secreted. Zn(2+) modulates binding to host coagulation factor XII (F12) and high molecular weight kininogen (KNG1). In terms of biological role, salivary protein with anticoagulant activity. Inhibits activation of host kallikrein-kinin system by preventing the reciprocal activation of coagulation factor XII (F12) and prekallikrein (KLKB1), and subsequent release of bradykinin. Inhibits host factor XII and high molecular weight kininogen (KNG1) binding to negatively charged surfaces. Weakly inhibits the alternative pathway of complement system activation in the host. This Anopheles stephensi (Indo-Pakistan malaria mosquito) protein is gSG7 salivary protein.